The following is a 985-amino-acid chain: Regulator of telomere elongation helicase 1 homolog (985 aa).

The Helicase ATP-binding domain occupies 7-303 (AGIPVHFPFE…QDMAGDEPKD (297 aa)). Position 42 to 49 (42 to 49 (SPTGTGKT)) interacts with ATP. [4Fe-4S] cluster-binding residues include cysteine 146, cysteine 164, cysteine 173, and cysteine 209. Positions 252 to 255 (DEAH) match the DEAH box motif. Threonine 874 carries the post-translational modification Phosphothreonine.

The protein belongs to the helicase family. RAD3/XPD subfamily.

The protein resides in the nucleus. It carries out the reaction ATP + H2O = ADP + phosphate + H(+). A probable ATP-dependent DNA helicase implicated in DNA repair and the maintenance of genomic stability. Acts as an anti-recombinase to counteract toxic recombination and limit crossover during meiosis. Regulates meiotic recombination and crossover homeostasis by physically dissociating strand invasion events and thereby promotes noncrossover repair by meiotic synthesis dependent strand annealing (SDSA) as well as disassembly of D loop recombination intermediates. The sequence is that of Regulator of telomere elongation helicase 1 homolog from Drosophila erecta (Fruit fly).